An 85-amino-acid polypeptide reads, in one-letter code: uncharacterized protein (85 aa).

Belongs to the ycf76 family.

The protein localises to the plastid. It is found in the chloroplast. This is an uncharacterized protein from Oryza sativa subsp. japonica (Rice).